Consider the following 463-residue polypeptide: Zinc finger protein PLAGL1 (463 aa).

C2H2-type zinc fingers lie at residues 4 to 26, 32 to 56, 62 to 84, 91 to 113, 120 to 142, 156 to 178, and 184 to 207; these read YPCQ…NYSH, YKCL…MATH, HQCA…LQTH, FGCE…LALH, LTCG…LKAH, HQCD…LVVH, and FLCQ…KKTH. Residues 285 to 310 form a disordered region; the sequence is LHPVAPPTSPPQPLQNHKYNTSSTSY. Residues 287–297 are compositionally biased toward pro residues; that stretch reads PVAPPTSPPQP. Positions 298–310 are enriched in polar residues; it reads LQNHKYNTSSTSY.

This sequence belongs to the krueppel C2H2-type zinc-finger protein family. In terms of assembly, interacts with THRSP.

It localises to the nucleus. Functionally, acts as a transcriptional activator. Involved in the transcriptional regulation of type 1 receptor for pituitary adenylate cyclase-activating polypeptide. The polypeptide is Zinc finger protein PLAGL1 (PLAGL1) (Sus scrofa (Pig)).